Consider the following 608-residue polypeptide: X-ray repair cross-complementing protein 6 (608 aa).

Residues 1–11 show a composition bias toward basic and acidic residues; sequence MSEWESYYKTE. The tract at residues 1–29 is disordered; it reads MSEWESYYKTEGEEEEEEEESPDTGGEYK. Ser-2 carries the N-acetylserine modification. Ser-2 is modified (phosphoserine). Residue Ser-6 is modified to Phosphoserine; by PRKDC. A compositionally biased stretch (acidic residues) spans 12–22; it reads GEEEEEEEESP. Lys-29 functions as the Schiff-base intermediate with DNA; for 5'-deoxyribose-5-phosphate lyase activity in the catalytic mechanism. At Lys-29 the chain carries N6-acetyllysine. Ser-49 carries the post-translational modification Phosphoserine; by PRKDC. A Ku domain is found at 259-466; sequence FKLGEDVVLM…IDKMKAIVQK (208 aa). The segment at 275-339 is DNA-binding; sequence VQKANKPFPV…EETEELKRFD (65 aa). Lys-315 participates in a covalent cross-link: Glycyl lysine isopeptide (Lys-Gly) (interchain with G-Cter in SUMO2). An N6-acetyllysine mark is found at Lys-329, Lys-336, and Lys-459. The segment at 371-480 is interaction with XRCC5; the sequence is SLVSGSSTLF…YRSDSFENPV (110 aa). 3 positions are modified to phosphoserine: Ser-475, Ser-518, and Ser-548. The disordered stretch occupies residues 534 to 557; it reads PEGKVAKRKQDDEGSTSKKPKVEL. The span at 537 to 557 shows a compositional bias: basic and acidic residues; the sequence is KVAKRKQDDEGSTSKKPKVEL. The interaction with DEAF1 stretch occupies residues 548–607; that stretch reads STSKKPKVELSEEELKAHFRKGTLGKLTVPTLKDICKAHGLKSGPKKQELLDALIRHLEK. Lys-554 participates in a covalent cross-link: Glycyl lysine isopeptide (Lys-Gly) (interchain with G-Cter in SUMO2). Ser-558 bears the Phosphoserine mark. Position 568 is an N6,N6,N6-trimethyllysine (Lys-568). In terms of domain architecture, SAP spans 571–605; sequence LGKLTVPTLKDICKAHGLKSGPKKQELLDALIRHL. An interaction with BAX region spans residues 576–581; the sequence is VPTLKD.

It belongs to the ku70 family. As to quaternary structure, heterodimer composed of XRCC5/Ku80 and XRCC6/Ku70. Component of the core long-range non-homologous end joining (NHEJ) complex (also named DNA-PK complex) composed of PRKDC, LIG4, XRCC4, XRCC6/Ku70, XRCC5/Ku86 and NHEJ1/XLF. Additional component of the NHEJ complex includes PAXX. Following autophosphorylation, PRKDC dissociates from DNA, leading to formation of the short-range NHEJ complex, composed of LIG4, XRCC4, XRCC6/Ku70, XRCC5/Ku86 and NHEJ1/XLF. The XRCC5-XRCC6 dimer also associates with NAA15, and this complex binds to the osteocalcin promoter and activates osteocalcin expression. In addition, XRCC6 interacts with the osteoblast-specific transcription factors MSX2, RUNX2 and DLX5. Interacts with ELF3. Interacts with ATP23. The XRCC5-XRRC6 dimer associates in a DNA-dependent manner with APEX1. Binds to CDK9. Identified in a complex with DEAF1 and XRCC5. Interacts with DEAF1 (via the SAND domain); the interaction is direct and may be inhibited by DNA-binding. Interacts with CLU. Interacts with NR4A3; the DNA-dependent protein kinase complex DNA-PK phosphorylates and activates NR4A3 and prevents NR4A3 ubiquitinylation and degradation. Interacts with CYREN (via KBM motif). Interacts (via N-terminus) with HSF1 (via N-terminus); this interaction is direct and prevents XRCC5/XRCC6 heterodimeric binding and non-homologous end joining (NHEJ) repair activities induced by ionizing radiation (IR). Part of the HDP-RNP complex composed of at least HEXIM1, PRKDC, XRCC5, XRCC6, paraspeckle proteins (SFPQ, NONO, PSPC1, RBM14, and MATR3) and NEAT1 RNA. Interacts with HMBOX1. Interacts with ATF7. Interacts with APLF (via KBM motif). Interacts with WRN (via KBM motif). The XRCC5-XRCC6 dimer associates with ALKBH2. Interacts with TPRN; TPRN interacts with a number of DNA damage response proteins, is recruited to sites of DNA damage and may play a role in DNA damage repair. When not acetylated, interacts with BAX. Interacts with ERCC6L2. Post-translationally, phosphorylation by PRKDC may enhance helicase activity. Phosphorylation of Ser-49 does not affect DNA repair. In terms of processing, ADP-ribosylated by PARP3. Methylation by SETD4 leads to accumulation in the cytoplasm and is a prerequisite for acetylation, possibly due to the change of subcellular from the nucleus to the cytosol initiated by methylation, acetylation occurring in the cytosol. Post-translationally, acetylation can be catalyzed in vitro by CREBBP/CBP and KAT2B/PCAF.

Its subcellular location is the nucleus. It is found in the chromosome. It localises to the cytoplasm. Single-stranded DNA-dependent ATP-dependent helicase that plays a key role in DNA non-homologous end joining (NHEJ) by recruiting DNA-PK to DNA. Required for double-strand break repair and V(D)J recombination. Also has a role in chromosome translocation. Has a role in chromosome translocation. The DNA helicase II complex binds preferentially to fork-like ends of double-stranded DNA in a cell cycle-dependent manner. It works in the 3'-5' direction. During NHEJ, the XRCC5-XRRC6 dimer performs the recognition step: it recognizes and binds to the broken ends of the DNA and protects them from further resection. Binding to DNA may be mediated by XRCC6. The XRCC5-XRRC6 dimer acts as a regulatory subunit of the DNA-dependent protein kinase complex DNA-PK by increasing the affinity of the catalytic subunit PRKDC to DNA by 100-fold. The XRCC5-XRRC6 dimer is probably involved in stabilizing broken DNA ends and bringing them together. The assembly of the DNA-PK complex to DNA ends is required for the NHEJ ligation step. Probably also acts as a 5'-deoxyribose-5-phosphate lyase (5'-dRP lyase), by catalyzing the beta-elimination of the 5' deoxyribose-5-phosphate at an abasic site near double-strand breaks. 5'-dRP lyase activity allows to 'clean' the termini of abasic sites, a class of nucleotide damage commonly associated with strand breaks, before such broken ends can be joined. The XRCC5-XRRC6 dimer together with APEX1 acts as a negative regulator of transcription. In association with NAA15, the XRCC5-XRRC6 dimer binds to the osteocalcin promoter and activates osteocalcin expression. Plays a role in the regulation of DNA virus-mediated innate immune response by assembling into the HDP-RNP complex, a complex that serves as a platform for IRF3 phosphorylation and subsequent innate immune response activation through the cGAS-STING pathway. Negatively regulates apoptosis by interacting with BAX and sequestering it from the mitochondria. Might have deubiquitination activity, acting on BAX. The protein is X-ray repair cross-complementing protein 6 (Xrcc6) of Mus musculus (Mouse).